Consider the following 421-residue polypeptide: UDP-N-acetylglucosamine 1-carboxyvinyltransferase (421 aa).

22–23 (KN) contributes to the phosphoenolpyruvate binding site. Position 95 (Arg-95) interacts with UDP-N-acetyl-alpha-D-glucosamine. The active-site Proton donor is Cys-119. The residue at position 119 (Cys-119) is a 2-(S-cysteinyl)pyruvic acid O-phosphothioketal. UDP-N-acetyl-alpha-D-glucosamine-binding positions include 124–128 (RPVDQ), Asp-309, and Ile-331.

The protein belongs to the EPSP synthase family. MurA subfamily.

It is found in the cytoplasm. It catalyses the reaction phosphoenolpyruvate + UDP-N-acetyl-alpha-D-glucosamine = UDP-N-acetyl-3-O-(1-carboxyvinyl)-alpha-D-glucosamine + phosphate. It functions in the pathway cell wall biogenesis; peptidoglycan biosynthesis. Its function is as follows. Cell wall formation. Adds enolpyruvyl to UDP-N-acetylglucosamine. This is UDP-N-acetylglucosamine 1-carboxyvinyltransferase from Leptothrix cholodnii (strain ATCC 51168 / LMG 8142 / SP-6) (Leptothrix discophora (strain SP-6)).